A 338-amino-acid polypeptide reads, in one-letter code: Large ribosomal subunit protein uL10 (338 aa).

The segment at 303–338 (VEVSAAPAAEEEKEEEKKEEEKKEEDTGAAGLALLF) is disordered. The span at 317 to 328 (EEKKEEEKKEED) shows a compositional bias: basic and acidic residues.

This sequence belongs to the universal ribosomal protein uL10 family. As to quaternary structure, part of the 50S ribosomal subunit. Forms part of the ribosomal stalk which helps the ribosome interact with GTP-bound translation factors. Forms a heptameric L10(L12)2(L12)2(L12)2 complex, where L10 forms an elongated spine to which the L12 dimers bind in a sequential fashion.

In terms of biological role, forms part of the ribosomal stalk, playing a central role in the interaction of the ribosome with GTP-bound translation factors. The protein is Large ribosomal subunit protein uL10 of Methanocaldococcus jannaschii (strain ATCC 43067 / DSM 2661 / JAL-1 / JCM 10045 / NBRC 100440) (Methanococcus jannaschii).